The chain runs to 266 residues: 3-methyl-2-oxobutanoate hydroxymethyltransferase (266 aa).

Mg(2+) is bound by residues Asp-47 and Asp-86. Residues 47–48, Asp-86, and Lys-114 contribute to the 3-methyl-2-oxobutanoate site; that span reads DS. Glu-116 contributes to the Mg(2+) binding site. Glu-183 acts as the Proton acceptor in catalysis.

The protein belongs to the PanB family. Homodecamer; pentamer of dimers. The cofactor is Mg(2+).

Its subcellular location is the cytoplasm. It catalyses the reaction 3-methyl-2-oxobutanoate + (6R)-5,10-methylene-5,6,7,8-tetrahydrofolate + H2O = 2-dehydropantoate + (6S)-5,6,7,8-tetrahydrofolate. The protein operates within cofactor biosynthesis; (R)-pantothenate biosynthesis; (R)-pantoate from 3-methyl-2-oxobutanoate: step 1/2. Its function is as follows. Catalyzes the reversible reaction in which hydroxymethyl group from 5,10-methylenetetrahydrofolate is transferred onto alpha-ketoisovalerate to form ketopantoate. The protein is 3-methyl-2-oxobutanoate hydroxymethyltransferase of Idiomarina loihiensis (strain ATCC BAA-735 / DSM 15497 / L2-TR).